The sequence spans 408 residues: Peptidase T (408 aa).

Zn(2+) is bound at residue histidine 81. The active site involves aspartate 83. Residue aspartate 142 coordinates Zn(2+). The Proton acceptor role is filled by glutamate 176. Zn(2+)-binding residues include glutamate 177, aspartate 199, and histidine 381.

This sequence belongs to the peptidase M20B family. It depends on Zn(2+) as a cofactor.

Its subcellular location is the cytoplasm. The enzyme catalyses Release of the N-terminal residue from a tripeptide.. Cleaves the N-terminal amino acid of tripeptides. The chain is Peptidase T from Streptococcus gordonii (strain Challis / ATCC 35105 / BCRC 15272 / CH1 / DL1 / V288).